Consider the following 314-residue polypeptide: Probable cell division protein WhiA (314 aa).

Residues 274–308 constitute a DNA-binding region (H-T-H motif); that stretch reads SLKELGEMMSTGKISKSGVNHRLRKLNEMADKLRS.

The protein belongs to the WhiA family.

Functionally, involved in cell division and chromosome segregation. This Staphylococcus saprophyticus subsp. saprophyticus (strain ATCC 15305 / DSM 20229 / NCIMB 8711 / NCTC 7292 / S-41) protein is Probable cell division protein WhiA.